The chain runs to 148 residues: 1,4-dihydroxy-2-naphthoyl-CoA hydrolase (148 aa).

Residue D15 is part of the active site.

It belongs to the 4-hydroxybenzoyl-CoA thioesterase family. DHNA-CoA hydrolase subfamily.

It catalyses the reaction 1,4-dihydroxy-2-naphthoyl-CoA + H2O = 1,4-dihydroxy-2-naphthoate + CoA + H(+). The protein operates within cofactor biosynthesis; phylloquinone biosynthesis. It participates in quinol/quinone metabolism; 1,4-dihydroxy-2-naphthoate biosynthesis; 1,4-dihydroxy-2-naphthoate from chorismate: step 7/7. Its function is as follows. Catalyzes the hydrolysis of 1,4-dihydroxy-2-naphthoyl-CoA (DHNA-CoA) to 1,4-dihydroxy-2-naphthoate (DHNA), a reaction involved in phylloquinone (vitamin K1) biosynthesis. The chain is 1,4-dihydroxy-2-naphthoyl-CoA hydrolase from Nostoc sp. (strain PCC 7120 / SAG 25.82 / UTEX 2576).